A 373-amino-acid chain; its full sequence is RNA 3'-terminal phosphate cyclase-like protein (373 aa).

This sequence belongs to the RNA 3'-terminal cyclase family. Type 2 subfamily. In terms of assembly, part of the small subunit (SSU) processome, composed of more than 70 proteins and the RNA chaperone small nucleolar RNA (snoRNA) U3. Interacts with BMS1.

Its subcellular location is the nucleus. The protein localises to the nucleolus. Its function is as follows. As part of the small subunit (SSU) processome, it plays a role in 40S-ribosomal-subunit biogenesis in the early pre-rRNA processing steps at sites A0, A1 and A2 that are required for proper maturation of the 18S RNA. Activates BMS1 by promoting GDP/GTP exchange. Does not have cyclase activity. This chain is RNA 3'-terminal phosphate cyclase-like protein, found in Homo sapiens (Human).